We begin with the raw amino-acid sequence, 437 residues long: Vitellogenin-1 (437 aa).

Positions 1 to 19 (MNPLKIFCFLALVIAVASA) are cleaved as a signal peptide. Disordered stretches follow at residues 161 to 194 (QQQPINGNKDYDYGSSQGNQGATSSEEDYSESWK) and 405 to 437 (PKSPFGKSAPAQKQRRYHGLHQSWKSGKNQNQE). Composition is skewed to polar residues over residues 174 to 184 (GSSQGNQGATS) and 427 to 437 (SWKSGKNQNQE).

It belongs to the AB hydrolase superfamily. Lipase family. Synthesized in the fat body and ovarian follicle cells and accumulate in the oocyte.

Its subcellular location is the secreted. Vitellogenin is the major yolk protein of eggs where it is used as a food source during embryogenesis. This is Vitellogenin-1 (VG1-GAMMA) from Ceratitis capitata (Mediterranean fruit fly).